We begin with the raw amino-acid sequence, 86 residues long: Small ribosomal subunit protein bS20 (86 aa).

Positions 1–25 are disordered; it reads MTNIKSQQKRNRTNERARLRNKSVK.

The protein belongs to the bacterial ribosomal protein bS20 family.

Its function is as follows. Binds directly to 16S ribosomal RNA. The polypeptide is Small ribosomal subunit protein bS20 (Mycobacterium leprae (strain Br4923)).